The chain runs to 151 residues: UPF0178 protein Ping_0754 (151 aa).

Belongs to the UPF0178 family.

In Psychromonas ingrahamii (strain DSM 17664 / CCUG 51855 / 37), this protein is UPF0178 protein Ping_0754.